Here is a 360-residue protein sequence, read N- to C-terminus: Inward rectifier potassium channel 13 (360 aa).

Residues 1–50 are Cytoplasmic-facing; that stretch reads MDSSNCKVIAPLLSQRYRRMVTKDGHSTLQMDGAQRGLAYLRDAWGILMD. A helical membrane pass occupies residues 51–77; it reads MRWRWMMLVFSASFVVHWLVFAVLWYV. Topologically, residues 78–105 are extracellular; it reads LAEMNGDLELDHDAPPENHTICVKYITS. An intramembrane region (helical; Pore-forming) is located at residues 106–122; the sequence is FTAAFSFSLETQLTIGY. The short motif at 119-124 is the Selectivity filter element; sequence TIGYGT. Residues 123–131 lie on the Extracellular side of the membrane; that stretch reads GTMFPSGDC. The helical transmembrane segment at 132–157 threads the bilayer; sequence PSAIALLAIQMLLGLMLEAFITGAFV. Residues 158 to 360 are Cytoplasmic-facing; it reads AKIARPKNRA…FQISETGLTE (203 aa). Phosphoserine; by PKC is present on S201. S287 is subject to Phosphoserine; by PKA.

Belongs to the inward rectifier-type potassium channel (TC 1.A.2.1) family. KCNJ13 subfamily. As to quaternary structure, homotetramer. Interacts with RAB28; the interaction may facilitate cone outer segments phagocytosis. Phosphorylation at Ser-201 by PKC strongly inhibits ionic currents, while phosphorylation at Ser-287 by PKA increases them. Predominantly expressed in small intestine. Expression is also detected in stomach, kidney, and all central nervous system regions tested with the exception of spinal cord.

Its subcellular location is the membrane. It is found in the cell membrane. It catalyses the reaction K(+)(in) = K(+)(out). Its activity is regulated as follows. Inhibited by Ba(2+) and Cs(+), although sensitivity to those inhibitors is much lower than in other Kir channels. Its function is as follows. Inward rectifier potassium channels are characterized by a greater tendency to allow potassium to flow into the cell rather than out of it. Their voltage dependence is regulated by the concentration of extracellular potassium; as external potassium is raised, the voltage range of the channel opening shifts to more positive voltages. The inward rectification is mainly due to the blockage of outward current by internal magnesium. KCNJ13 has a very low single channel conductance, low sensitivity to block by external barium and cesium, and no dependence of its inward rectification properties on the internal blocking particle magnesium. This Homo sapiens (Human) protein is Inward rectifier potassium channel 13 (KCNJ13).